The primary structure comprises 64 residues: Large ribosomal subunit protein bL28 (64 aa).

Residues 1-26 (MARRDQLTGKGPLSGNTRSHAMNHSK) are disordered.

It belongs to the bacterial ribosomal protein bL28 family.

This is Large ribosomal subunit protein bL28 from Ureaplasma urealyticum serovar 10 (strain ATCC 33699 / Western).